The following is a 164-amino-acid chain: UPF0304 protein CKO_00501 (164 aa).

Belongs to the UPF0304 family.

This chain is UPF0304 protein CKO_00501, found in Citrobacter koseri (strain ATCC BAA-895 / CDC 4225-83 / SGSC4696).